Consider the following 231-residue polypeptide: Demethylmenaquinone methyltransferase (231 aa).

S-adenosyl-L-methionine contacts are provided by residues Thr62, Asp80, 102-103, and Ser119; that span reads DA.

The protein belongs to the class I-like SAM-binding methyltransferase superfamily. MenG/UbiE family.

The enzyme catalyses a 2-demethylmenaquinol + S-adenosyl-L-methionine = a menaquinol + S-adenosyl-L-homocysteine + H(+). The protein operates within quinol/quinone metabolism; menaquinone biosynthesis; menaquinol from 1,4-dihydroxy-2-naphthoate: step 2/2. Functionally, methyltransferase required for the conversion of demethylmenaquinol (DMKH2) to menaquinol (MKH2). This chain is Demethylmenaquinone methyltransferase, found in Streptomyces avermitilis (strain ATCC 31267 / DSM 46492 / JCM 5070 / NBRC 14893 / NCIMB 12804 / NRRL 8165 / MA-4680).